The primary structure comprises 206 residues: Ras-related protein Ral-B (206 aa).

Residue 21–29 participates in GTP binding; that stretch reads GSGGVGKSA. The Effector region signature appears at 43–51; it reads YEPTKADSY. GTP-binding positions include 68–72, 128–131, and 158–160; these read DTAGQ, NKSD, and SAK. The interval 181–206 is disordered; that stretch reads MSENKDKNGRKSGKSKKSFKERCCLL. The residue at position 203 (C203) is a Cysteine methyl ester. C203 carries the S-geranylgeranyl cysteine lipid modification. Positions 204–206 are cleaved as a propeptide — removed in mature form; sequence CLL.

The protein belongs to the small GTPase superfamily. Ras family. As to quaternary structure, interacts with EXOC2/Sec5 and EXOC8/Exo84. Interacts (via effector domain) with RALBP1. Post-translationally, prenylation is essential for membrane localization. In terms of processing, the farnesylated form confers resistance to the proapoptotic and anti-anchorage-dependent growth effects of some geranylgeranyltransferase I inhibitors.

It localises to the cell membrane. Its subcellular location is the midbody. The enzyme catalyses GTP + H2O = GDP + phosphate + H(+). With respect to regulation, alternates between an inactive form bound to GDP and an active form bound to GTP. Activated by a guanine nucleotide-exchange factor (GEF) and inactivated by a GTPase-activating protein (GAP). Multifunctional GTPase involved in a variety of cellular processes including gene expression, cell migration, cell proliferation, oncogenic transformation and membrane trafficking. Accomplishes its multiple functions by interacting with distinct downstream effectors. Acts as a GTP sensor for GTP-dependent exocytosis of dense core vesicles. Required both to stabilize the assembly of the exocyst complex and to localize functional exocyst complexes to the leading edge of migrating cells. Required for suppression of apoptosis. In late stages of cytokinesis, upon completion of the bridge formation between dividing cells, mediates exocyst recruitment to the midbody to drive abscission. Involved in ligand-dependent receptor mediated endocytosis of the EGF and insulin receptors. In Rattus norvegicus (Rat), this protein is Ras-related protein Ral-B (Ralb).